The sequence spans 417 residues: Lissencephaly-1 homolog (417 aa).

In terms of domain architecture, LisH spans Q7–G39. Residues T54–F86 adopt a coiled-coil conformation. 7 WD repeats span residues G120 to T159, G162 to T203, G204 to T243, G246 to V285, G288 to V340, G343 to T382, and A385 to R417.

Belongs to the WD repeat LIS1/nudF family.

Its subcellular location is the cytoplasm. It localises to the cytoskeleton. The protein localises to the microtubule organizing center. The protein resides in the centrosome. Functionally, positively regulates the activity of the minus-end directed microtubule motor protein dynein. May enhance dynein-mediated microtubule sliding by targeting dynein to the microtubule plus end. Required for several dynein- and microtubule-dependent processes. The protein is Lissencephaly-1 homolog of Schistosoma mansoni (Blood fluke).